The chain runs to 180 residues: UPF0397 protein SSA_0592 (180 aa).

Helical transmembrane passes span 9–29, 45–65, 72–92, 113–133, and 146–166; these read VVAT…NIPT, LFSV…GHAI, GGLW…VGFF, LIQF…DVIV, and IVAI…LLTA.

This sequence belongs to the UPF0397 family.

The protein resides in the cell membrane. This Streptococcus sanguinis (strain SK36) protein is UPF0397 protein SSA_0592.